Here is a 308-residue protein sequence, read N- to C-terminus: MKILLTGAGGMVGKNILAHTKSKDYEFITPSSKELDLLEKKHITTYLKHHKPNFIIHAAGIVGGIHANINNPVKFLVENMQMGINLLTAAKDNNIRKLLNLGSSCMYPKDCDSGLTEDMILTGELESTNEGYALAKITSAKLCEYINREDSEFQYKTAIPCNLYGKYDKFDENNSHMIPAVIKKIVTAIETGKSEVEIWGDGEARREFMYAEDLADFIFYTINNFTKMPQNINVGLGQDYTITEYYKVIAKILGYKGTFVYDKSKPVGMRRKLIDNTLLSEFGWSNKVDLESGISKTCQYFLNEKNND.

NADP(+) is bound by residues 7-13 (GAGGMVG) and 101-104 (LGSS). The active-site Proton donor/acceptor is Tyr132. Residues Lys136, 160–163 (PCNL), and His176 contribute to the NADP(+) site. Substrate contacts are provided by Lys184, Trp199, and Arg206.

The protein belongs to the NAD(P)-dependent epimerase/dehydratase family. Fucose synthase subfamily. As to quaternary structure, homodimer.

The enzyme catalyses GDP-beta-L-colitose + NAD(+) = GDP-4-dehydro-3,6-dideoxy-alpha-D-mannose + NADH + H(+). The catalysed reaction is GDP-beta-L-colitose + NADP(+) = GDP-4-dehydro-3,6-dideoxy-alpha-D-mannose + NADPH + H(+). Its pathway is nucleotide-sugar metabolism; GDP-L-colitose biosynthesis. Its function is as follows. Involved in the biosynthesis of the L-colitose (3,6-dideoxyl-L-xylo-hexose) present in the O-antigen region of lipopolysaccharides (LPS) where it serves as antigenic determinant and are vital for bacterial defense and survival. Catalyzes the two-step NADP-dependent conversion of GDP-4-keto-3,6-dideoxy-D-mannose to GDP-L-colitose. ColC is a bifunctional enzyme catalyzing the C-5 epimerization of GDP-4-keto-3,6-dideoxy-D-mannose and the subsequent C-4 keto reduction of the resulting L-epimer to give GDP-L-colitose. It can use both NADP(+) and NAD(+) as electron acceptor, with a slight preference for NADP(+). The chain is GDP-L-colitose synthase from Yersinia pseudotuberculosis.